A 163-amino-acid polypeptide reads, in one-letter code: Nucleotide-binding protein MS1759 (163 aa).

It belongs to the YajQ family.

In terms of biological role, nucleotide-binding protein. The protein is Nucleotide-binding protein MS1759 of Mannheimia succiniciproducens (strain KCTC 0769BP / MBEL55E).